The chain runs to 185 residues: MKSLLLTVTLSSLVATLQTYDDLPFISEEDKLSGVWFIKATVSQRREVEGETLVAFPIKFTCPEEGTLELRHTLASKGECINVGIRLQRTEEPGQYSAFWGHTLFYIYDLPVKDHYIIYCESHPFQKISQFGYLIGKYPEENQDTLEVFKEFIQHKGFLQEKIGVPEQRDRCIPIHDSAHQDHKC.

The N-terminal stretch at 1–19 (MKSLLLTVTLSSLVATLQT) is a signal peptide. Residues Cys80 and Cys172 are joined by a disulfide bond.

Belongs to the calycin superfamily. Lipocalin family. In terms of tissue distribution, specifically expressed in vomeronasal and posterior glands of the nasal septum, the ducts of which open into the lumen of the vomeronasal organ.

Its subcellular location is the secreted. Functionally, transport of lipophilic molecules, possible pheromone-carrier. The protein is Vomeronasal secretory protein 2 (Lcn4) of Mus musculus (Mouse).